The primary structure comprises 159 residues: Ribosomal RNA large subunit methyltransferase H (159 aa).

S-adenosyl-L-methionine-binding positions include Leu-76, Gly-108, and Phe-127–Leu-132.

Belongs to the RNA methyltransferase RlmH family. As to quaternary structure, homodimer.

The protein resides in the cytoplasm. The enzyme catalyses pseudouridine(1915) in 23S rRNA + S-adenosyl-L-methionine = N(3)-methylpseudouridine(1915) in 23S rRNA + S-adenosyl-L-homocysteine + H(+). In terms of biological role, specifically methylates the pseudouridine at position 1915 (m3Psi1915) in 23S rRNA. This is Ribosomal RNA large subunit methyltransferase H from Listeria monocytogenes serotype 4a (strain HCC23).